The sequence spans 437 residues: Leucine-rich repeat flightless-interacting protein 2 (437 aa).

Serine 18 is modified (phosphoserine). Positions 22–49 (EALSNIAREAEARLAAKRAARAEARDIR) form a coiled coil. The segment covering 33–62 (ARLAAKRAARAEARDIRMRELERQQRESSS) has biased composition (basic and acidic residues). A disordered region spans residues 33 to 152 (ARLAAKRAAR…DTSLSELRES (120 aa)). The segment covering 63-74 (KDITGTHWSRAS) has biased composition (polar residues). Residues 77–105 (KRRDMMYDSIKDRSSRVSSLLDEKSDKQY) are compositionally biased toward basic and acidic residues. Residues 110 to 139 (TRPSSRNSASATTPLSGNSSRRGSGDTSSL) show a composition bias toward polar residues. Residues serine 114, serine 117, serine 125, serine 129, and serine 133 each carry the phosphoserine modification. Threonine 136 is modified (phosphothreonine). Residues serine 137 and serine 138 each carry the phosphoserine modification. Coiled coils occupy residues 143–239 (DTSL…LIEK) and 282–430 (LDVR…KANR).

This sequence belongs to the LRRFIP family. Interacts with DVL3 and FLII. Weakly interacts with MYD88 in resting cells. Following LPS-stimulation, the interaction with MYD88 is rapidly enhanced; the complex gradually dissociates to basal levels after 6 hours of stimulation. Interaction with MYD88 is regulated by LPS-induced phosphorylation. In the presence of LPS, competes with FLII for MYD88-binding.

In terms of biological role, may function as activator of the canonical Wnt signaling pathway, in association with DVL3, upstream of CTNNB1/beta-catenin. Positively regulates Toll-like receptor (TLR) signaling in response to agonist probably by competing with the negative FLII regulator for MYD88-binding. The protein is Leucine-rich repeat flightless-interacting protein 2 (Lrrfip2) of Rattus norvegicus (Rat).